The sequence spans 443 residues: 23S rRNA (uracil(1939)-C(5))-methyltransferase RlmD (443 aa).

The region spanning 10-68 (RVTTKQTLTVTVNSLDPFGQGVAHHQGKAIFIPGALPGEQAEIELTEQKRQYSRGKLKR) is the TRAM domain. Cys-81, Cys-87, Cys-90, and Cys-168 together coordinate [4Fe-4S] cluster. Gln-271, Phe-300, Asn-305, Glu-321, Asn-348, and Asp-369 together coordinate S-adenosyl-L-methionine. Cys-395 serves as the catalytic Nucleophile.

Belongs to the class I-like SAM-binding methyltransferase superfamily. RNA M5U methyltransferase family. RlmD subfamily.

The catalysed reaction is uridine(1939) in 23S rRNA + S-adenosyl-L-methionine = 5-methyluridine(1939) in 23S rRNA + S-adenosyl-L-homocysteine + H(+). In terms of biological role, catalyzes the formation of 5-methyl-uridine at position 1939 (m5U1939) in 23S rRNA. The sequence is that of 23S rRNA (uracil(1939)-C(5))-methyltransferase RlmD from Yersinia enterocolitica serotype O:8 / biotype 1B (strain NCTC 13174 / 8081).